The sequence spans 111 residues: Cyanovirin-N homolog (111 aa).

It belongs to the cyanovirin-N family.

In terms of biological role, mannose-binding lectin. In Neurospora crassa (strain ATCC 24698 / 74-OR23-1A / CBS 708.71 / DSM 1257 / FGSC 987), this protein is Cyanovirin-N homolog.